Consider the following 339-residue polypeptide: Tetraacyldisaccharide 4'-kinase (339 aa).

Position 58-65 (58-65 (NVGGVGKT)) interacts with ATP.

Belongs to the LpxK family.

It catalyses the reaction a lipid A disaccharide + ATP = a lipid IVA + ADP + H(+). The protein operates within glycolipid biosynthesis; lipid IV(A) biosynthesis; lipid IV(A) from (3R)-3-hydroxytetradecanoyl-[acyl-carrier-protein] and UDP-N-acetyl-alpha-D-glucosamine: step 6/6. In terms of biological role, transfers the gamma-phosphate of ATP to the 4'-position of a tetraacyldisaccharide 1-phosphate intermediate (termed DS-1-P) to form tetraacyldisaccharide 1,4'-bis-phosphate (lipid IVA). In Chromobacterium violaceum (strain ATCC 12472 / DSM 30191 / JCM 1249 / CCUG 213 / NBRC 12614 / NCIMB 9131 / NCTC 9757 / MK), this protein is Tetraacyldisaccharide 4'-kinase.